The sequence spans 224 residues: Response regulator protein GraR (224 aa).

Positions 2–115 (QILLVEDDNT…VLIAKLQAIY (114 aa)) constitute a Response regulatory domain. 4-aspartylphosphate is present on aspartate 51. A DNA-binding region (ompR/PhoB-type) is located at residues 126-224 (KRTLTWQDAV…KVGKGYMAHE (99 aa)). Phosphothreonine is present on residues threonine 128, threonine 130, and threonine 149.

As to quaternary structure, interacts with GraX. In terms of processing, phosphorylated by GraS. Phosphorylated by Stk1; phosphorylation increases the DNA-binding activity of GraR.

Its subcellular location is the cytoplasm. Its function is as follows. Member of the two-component regulatory system GraR/GraS involved in resistance against cationic antimicrobial peptides (CAMPs). Upon phosphorylation by GraS, functions as a transcription regulator by direct binding to promoter regions of target genes such as adhesins, exoproteins, transporters, toxins, and proteins involved in cell wall synthesis. Down-regulates the expression of many genes involved in RNA and amino acid synthesis or glycolysis. This chain is Response regulator protein GraR (graR), found in Staphylococcus aureus (strain USA300).